The chain runs to 341 residues: Cyanuric acid amidohydrolase (341 aa).

The segment at 1 to 90 (MAPIEILKFP…HVTFFLRSPG (90 aa)) is RU A. Substrate-binding positions include R51 and 71–72 (SG). The segment at 95-229 (GLSAAVGHTR…CHILVLASTS (135 aa)) is RU B. The active site involves K144. Substrate-binding positions include R176 and 212-213 (SS). S212 acts as the Nucleophile in catalysis. Positions 235–341 (LHAVSRPMAD…SLCLVYETSI (107 aa)) are RU C. E273 is a binding site for Mg(2+). Residues R300 and 319–320 (SG) each bind substrate. Residues A322, Q325, G326, P327, and G330 each coordinate Mg(2+).

It belongs to the cyclic amide hydrolase (CyAH) family. Homotetramer.

It catalyses the reaction cyanurate + H2O = 1-carboxybiuret + H(+). It functions in the pathway xenobiotic degradation; atrazine degradation; biuret from cyanurate: step 1/1. Its activity is regulated as follows. Inhibited by barbituric acid. Responsible for the hydrolysis of cyanuric acid, an intermediate formed during catabolism of s-triazine based compounds in herbicides such as atrazine and polymers such as melamine. Catalyzes the hydrolytic opening of the s-triazine ring of cyanuric acid (2,4,6-trihydroxy-s-triazine) to yield carbon dioxide and carboxybiuret, which spontaneously decarboxylates to biuret. Only active on cyanuric acid and N-methylisocyanuric acid. The protein is Cyanuric acid amidohydrolase of Sarocladium sp.